The sequence spans 200 residues: MPSLYLASGSPRRRELLTQIGVPFTVLSAQIDETPFDHETPAAYVERLALGKAQAGLSVLPAEQQACVMGADTAVVLDGRILGKPVDEADALAMLMALSGREHQVLTAVALCDRQRSDTRIVTSRVRFRPIQIHEAQAYWTSGEPADKAGGYAIQGLAAIFVEGLQGSYSGVVGLPLCETAELLGHFGIPCWQCLEGDKS.

The active-site Proton acceptor is D72.

Belongs to the Maf family. YhdE subfamily. A divalent metal cation serves as cofactor.

It is found in the cytoplasm. The catalysed reaction is dTTP + H2O = dTMP + diphosphate + H(+). It catalyses the reaction UTP + H2O = UMP + diphosphate + H(+). Its function is as follows. Nucleoside triphosphate pyrophosphatase that hydrolyzes dTTP and UTP. May have a dual role in cell division arrest and in preventing the incorporation of modified nucleotides into cellular nucleic acids. The sequence is that of dTTP/UTP pyrophosphatase from Pseudomonas syringae pv. syringae (strain B728a).